We begin with the raw amino-acid sequence, 521 residues long: Type II methyltransferase M.AluI (521 aa).

The 484-residue stretch at 8–491 (YSFVDLFAGI…REHVRRDRAL (484 aa)) folds into the SAM-dependent MTase C5-type domain. Cys-84 is an active-site residue.

Belongs to the class I-like SAM-binding methyltransferase superfamily. C5-methyltransferase family.

It carries out the reaction a 2'-deoxycytidine in DNA + S-adenosyl-L-methionine = a 5-methyl-2'-deoxycytidine in DNA + S-adenosyl-L-homocysteine + H(+). Its function is as follows. A methylase, recognizes the double-stranded sequence 5'-AGCT-3', methylates C-3 on both strands, and protects the DNA from cleavage by the AluI endonuclease. This is Type II methyltransferase M.AluI from Cellulosimicrobium cellulans (Arthrobacter luteus).